The primary structure comprises 256 residues: 6-phosphogluconolactonase (256 aa).

This sequence belongs to the glucosamine/galactosamine-6-phosphate isomerase family. 6-phosphogluconolactonase subfamily.

It carries out the reaction 6-phospho-D-glucono-1,5-lactone + H2O = 6-phospho-D-gluconate + H(+). The protein operates within carbohydrate degradation; pentose phosphate pathway; D-ribulose 5-phosphate from D-glucose 6-phosphate (oxidative stage): step 2/3. Its function is as follows. Hydrolysis of 6-phosphogluconolactone to 6-phosphogluconate. The protein is 6-phosphogluconolactonase (pgl) of Chlamydia muridarum (strain MoPn / Nigg).